Consider the following 375-residue polypeptide: PTS system fructose-specific EIIC component (375 aa).

A PTS EIIC type-2 domain is found at 16-370 (VKEDLMTGVS…KPNFDAKMAA (355 aa)). The next 10 helical transmembrane spans lie at 24-44 (VSFMIPFVTIGGIFLALGYAV), 68-88 (IGVAGLTLMVPVLGAYIAYAI), 93-113 (GLAPGFILSYIIQQGNVLQAA), 122-142 (GSAGAGYLGAIVAGFLAGIVA), 160-180 (VLLIPVATTAVLTPVMLFVLG), 203-223 (AILLGGILGAMMAADMGGPIN), 238-258 (VTAPMAAVMIAGMVPPIGLAL), 279-299 (VLLGFSFITEGAIPYAAADPA), 301-321 (VIPSVVAGSAVAGAASMALGV), and 340-360 (FMFIACILLGSIVTAVIATAI).

The protein resides in the cell membrane. The phosphoenolpyruvate-dependent sugar phosphotransferase system (sugar PTS), a major carbohydrate active transport system, catalyzes the phosphorylation of incoming sugar substrates concomitantly with their translocation across the cell membrane. The enzyme II PtfABC PTS system is involved in fructose transport. This chain is PTS system fructose-specific EIIC component, found in Haloferax volcanii (strain ATCC 29605 / DSM 3757 / JCM 8879 / NBRC 14742 / NCIMB 2012 / VKM B-1768 / DS2) (Halobacterium volcanii).